Here is a 345-residue protein sequence, read N- to C-terminus: Methionine import ATP-binding protein MetN (345 aa).

Residues 2 to 241 (IKLKNISKIF…PKTELAQEFI (240 aa)) form the ABC transporter domain. 38-45 (GASGAGKS) is an ATP binding site.

The protein belongs to the ABC transporter superfamily. Methionine importer (TC 3.A.1.24) family. The complex is composed of two ATP-binding proteins (MetN), two transmembrane proteins (MetI) and a solute-binding protein (MetQ).

The protein localises to the cell inner membrane. The catalysed reaction is L-methionine(out) + ATP + H2O = L-methionine(in) + ADP + phosphate + H(+). It carries out the reaction D-methionine(out) + ATP + H2O = D-methionine(in) + ADP + phosphate + H(+). Functionally, part of the ABC transporter complex MetNIQ involved in methionine import. Responsible for energy coupling to the transport system. The chain is Methionine import ATP-binding protein MetN from Mannheimia succiniciproducens (strain KCTC 0769BP / MBEL55E).